A 296-amino-acid chain; its full sequence is GTPase Era (296 aa).

Residues 7–173 form the Era-type G domain; that stretch reads KAGFVSIIGR…VDLVREHLPE (167 aa). A G1 region spans residues 15–22; sequence GRPNVGKS. 15–22 lines the GTP pocket; it reads GRPNVGKS. Positions 41–45 are G2; the sequence is QTTRN. Positions 62–65 are G3; sequence DTPG. GTP contacts are provided by residues 62–66 and 122–125; these read DTPGI and NKID. A G4 region spans residues 122–125; the sequence is NKID. The tract at residues 152–154 is G5; it reads ISA. Residues 204 to 281 form the KH type-2 domain; that stretch reads TNREVPYGTA…YLELFVQVQE (78 aa).

Belongs to the TRAFAC class TrmE-Era-EngA-EngB-Septin-like GTPase superfamily. Era GTPase family. Monomer.

It localises to the cytoplasm. Its subcellular location is the cell inner membrane. Its function is as follows. An essential GTPase that binds both GDP and GTP, with rapid nucleotide exchange. Plays a role in 16S rRNA processing and 30S ribosomal subunit biogenesis and possibly also in cell cycle regulation and energy metabolism. In Trichlorobacter lovleyi (strain ATCC BAA-1151 / DSM 17278 / SZ) (Geobacter lovleyi), this protein is GTPase Era.